The sequence spans 72 residues: Translation initiation factor IF-1 (72 aa).

The S1-like domain occupies 1 to 72 (MAKDDVIEVE…TRGRITYRYK (72 aa)). Tyrosine 60 carries the phosphotyrosine modification.

Belongs to the IF-1 family. As to quaternary structure, component of the 30S ribosomal translation pre-initiation complex which assembles on the 30S ribosome in the order IF-2 and IF-3, IF-1 and N-formylmethionyl-tRNA(fMet); mRNA recruitment can occur at any time during PIC assembly.

The protein resides in the cytoplasm. In terms of biological role, one of the essential components for the initiation of protein synthesis. Stabilizes the binding of IF-2 and IF-3 on the 30S subunit to which N-formylmethionyl-tRNA(fMet) subsequently binds. Helps modulate mRNA selection, yielding the 30S pre-initiation complex (PIC). Upon addition of the 50S ribosomal subunit IF-1, IF-2 and IF-3 are released leaving the mature 70S translation initiation complex. The chain is Translation initiation factor IF-1 from Geobacillus kaustophilus (strain HTA426).